A 455-amino-acid chain; its full sequence is UDP-N-acetylmuramoylalanine--D-glutamate ligase (455 aa).

118-124 provides a ligand contact to ATP; it reads GSNAKST.

It belongs to the MurCDEF family.

The protein resides in the cytoplasm. The catalysed reaction is UDP-N-acetyl-alpha-D-muramoyl-L-alanine + D-glutamate + ATP = UDP-N-acetyl-alpha-D-muramoyl-L-alanyl-D-glutamate + ADP + phosphate + H(+). The protein operates within cell wall biogenesis; peptidoglycan biosynthesis. In terms of biological role, cell wall formation. Catalyzes the addition of glutamate to the nucleotide precursor UDP-N-acetylmuramoyl-L-alanine (UMA). This Chromohalobacter salexigens (strain ATCC BAA-138 / DSM 3043 / CIP 106854 / NCIMB 13768 / 1H11) protein is UDP-N-acetylmuramoylalanine--D-glutamate ligase.